A 322-amino-acid chain; its full sequence is MIFATLEHILTHICFSIILIVITIHLITLLVHEIGLYNLSEKGMIATFFCITGLLVSRWIYSGHFPLSDLYESLIFLSWSFAIIHMVPKIRNHPNSLSTITAPSTIFTQGFTTSGLLTKMHQSTILVPALQSKWLMMHVSMMLLSYAALLCGSLLSIALLVITFRKNIDILGKSNHLFIGSFSFGKTQYLNEKRSLLHLQKASFLSFRNYHRYQLTHRLDYWSYRVISLGFTFLTIGILSGAVWANEAWGSYWNWDPKETWAFITWTIFAIYSHTRTNKSLQGANSAIVASMGFLIIWICYFGVNLLGIGLHSYGSFTLTSN.

Helical transmembrane passes span 9 to 29 (ILTH…LITL), 43 to 63 (GMIA…IYSG), 70 to 90 (LYES…VPKI), 142 to 162 (MLLS…LLVI), 226 to 246 (VISL…VWAN), 259 to 274 (ETWA…IYSH), and 287 to 307 (AIVA…VNLL).

It belongs to the CcmF/CycK/Ccl1/NrfE/CcsA family. As to quaternary structure, may interact with Ccs1.

The protein localises to the plastid. It localises to the chloroplast thylakoid membrane. Required during biogenesis of c-type cytochromes (cytochrome c6 and cytochrome f) at the step of heme attachment. This chain is Cytochrome c biogenesis protein CcsA, found in Chloranthus spicatus (Chulantree).